The chain runs to 102 residues: NADH-quinone oxidoreductase subunit K (102 aa).

3 helical membrane-spanning segments follow: residues 5-25, 30-50, and 62-82; these read LTQY…GIIL, IIII…NLVA, and IFAL…LAIL.

Belongs to the complex I subunit 4L family. As to quaternary structure, NDH-1 is composed of 14 different subunits. Subunits NuoA, H, J, K, L, M, N constitute the membrane sector of the complex.

It localises to the cell inner membrane. The catalysed reaction is a quinone + NADH + 5 H(+)(in) = a quinol + NAD(+) + 4 H(+)(out). Functionally, NDH-1 shuttles electrons from NADH, via FMN and iron-sulfur (Fe-S) centers, to quinones in the respiratory chain. The immediate electron acceptor for the enzyme in this species is believed to be ubiquinone. Couples the redox reaction to proton translocation (for every two electrons transferred, four hydrogen ions are translocated across the cytoplasmic membrane), and thus conserves the redox energy in a proton gradient. The sequence is that of NADH-quinone oxidoreductase subunit K from Beijerinckia indica subsp. indica (strain ATCC 9039 / DSM 1715 / NCIMB 8712).